A 452-amino-acid polypeptide reads, in one-letter code: Phosphoglucosamine mutase (452 aa).

Ser-97 serves as the catalytic Phosphoserine intermediate. Residues Ser-97, Asp-236, Asp-238, and Asp-240 each coordinate Mg(2+). The residue at position 97 (Ser-97) is a Phosphoserine.

It belongs to the phosphohexose mutase family. Mg(2+) serves as cofactor. Post-translationally, activated by phosphorylation.

It catalyses the reaction alpha-D-glucosamine 1-phosphate = D-glucosamine 6-phosphate. Catalyzes the conversion of glucosamine-6-phosphate to glucosamine-1-phosphate. The sequence is that of Phosphoglucosamine mutase from Prochlorococcus marinus (strain MIT 9515).